A 1024-amino-acid chain; its full sequence is NLR family CARD domain-containing protein 4 (1024 aa).

Residues 1-88 form the CARD domain; the sequence is MNFIKDNSRA…PLFQDLNGQS (88 aa). Residues 95 to 298 form a nucleotide-binding domain (NBD) region; that stretch reads EGDLDDLAQD…QFGALTAEVG (204 aa). The 314-residue stretch at 163–476 folds into the NACHT domain; that stretch reads SPCIIEGESG…VTKGNGYLQK (314 aa). ATP is bound at residue 169–176; that stretch reads GESGKGKS. Residues 356 to 463 are winged-helix domain (WHD); the sequence is SHTQTTLFHT…RLSSLLTSHE (108 aa). Residue Ser-533 is modified to Phosphoserine. LRR repeat units lie at residues 578–598, 656–679, 735–758, 762–785, 787–812, 824–847, 848–870, 878–902, 911–933, 936–963, 965–985, and 999–1021; these read FFQG…LFDF, KQEF…DIRY, VTNL…LTDS, LKNL…KLAE, LKNL…DYIV, EIQL…LHNL, VKLS…ALHE, LEQL…LLKH, KLGL…FFGK, LKNF…VFEN, KQLV…ALVR, and EARL…AFKL.

In terms of assembly, homooligomer; homooligomerizes to induce formation of the NLRC4 inflammasome. Homooligomerizes following activation by pathogenic proteins. Component of the NLRC4 inflammasome, at least composed of NLRC4 and caspase-1 (CASP1). Some NLRC4 inflammasomes contain PYCARD/ASC, while some others directly contact and activate CASP1. Interacts (via CARD domain) with PYCARD/ASC, pro-caspase-1 (CASP1), NOD2, BCL10 and NALP1 (NAC) by CARD-CARD interaction. Interacts with EIF2AK2/PKR. In terms of processing, phosphorylated at Ser-533 following infection of macrophages with S.typhimurium (Salmonella). Phosphorylation is essential for NLRC4 inflammasome function to promote caspase-1 activation and pyroptosis. PRKCD phosphorylates Ser-533 in vitro. Isoform 2 is expressed ubiquitously, although highly expressed in lung and spleen. Isoform 1 is highly expressed in lung, followed by leukocytes especially monocytes, lymph node, colon, brain, prostate, placenta, spleen, bone marrow and fetal liver. Isoform 4 is only detected in brain.

The protein resides in the cytoplasm. It is found in the cytosol. Its subcellular location is the inflammasome. Key component of inflammasomes that indirectly senses specific proteins from pathogenic bacteria and fungi and responds by assembling an inflammasome complex that promotes caspase-1 activation, cytokine production and macrophage pyroptosis. The NLRC4 inflammasome is activated as part of the innate immune response to a range of intracellular bacteria. The polypeptide is NLR family CARD domain-containing protein 4 (NLRC4) (Homo sapiens (Human)).